The primary structure comprises 144 residues: Ribosome-binding factor A (144 aa).

The segment at 120–144 (DKRRMAESGREEDDAAPDETTEDNA) is disordered. The span at 129-144 (REEDDAAPDETTEDNA) shows a compositional bias: acidic residues.

Belongs to the RbfA family. Monomer. Binds 30S ribosomal subunits, but not 50S ribosomal subunits or 70S ribosomes.

The protein localises to the cytoplasm. One of several proteins that assist in the late maturation steps of the functional core of the 30S ribosomal subunit. Associates with free 30S ribosomal subunits (but not with 30S subunits that are part of 70S ribosomes or polysomes). Required for efficient processing of 16S rRNA. May interact with the 5'-terminal helix region of 16S rRNA. This Aeromonas hydrophila subsp. hydrophila (strain ATCC 7966 / DSM 30187 / BCRC 13018 / CCUG 14551 / JCM 1027 / KCTC 2358 / NCIMB 9240 / NCTC 8049) protein is Ribosome-binding factor A.